The chain runs to 83 residues: Putative membrane protein insertion efficiency factor (83 aa).

Belongs to the UPF0161 family.

It is found in the cell membrane. Could be involved in insertion of integral membrane proteins into the membrane. The sequence is that of Putative membrane protein insertion efficiency factor from Staphylococcus saprophyticus subsp. saprophyticus (strain ATCC 15305 / DSM 20229 / NCIMB 8711 / NCTC 7292 / S-41).